We begin with the raw amino-acid sequence, 306 residues long: Glutathione transport system permease protein GsiC (306 aa).

Residues 1–8 (MLNYVIKR) lie on the Cytoplasmic side of the membrane. Residues 9-29 (LLGLIPTLFIVSVLVFLFVHM) traverse the membrane as a helical segment. Residues 30-102 (LPGDPARLIA…SRFMPTLWLT (73 aa)) lie on the Periplasmic side of the membrane. Residues 95-292 (FMPTLWLTIT…LEFILINLVV (198 aa)) enclose the ABC transmembrane type-1 domain. Residues 103-123 (ITSMVWAVIFGMAAGIIAAVW) form a helical membrane-spanning segment. The Cytoplasmic segment spans residues 124 to 134 (RNRWPDRLSMT). The helical transmembrane segment at 135–155 (IAVSGISFPAFALGMFLIQVF) threads the bilayer. Over 156-168 (SVELGWLPTVGAD) the chain is Periplasmic. A helical membrane pass occupies residues 169–189 (SWQHYILPSLTLGAAVAAVMA). The Cytoplasmic segment spans residues 190–228 (RFTRASFVDVLSEDYMRTARAKGVSETWVVLKHGLRNAM). A helical transmembrane segment spans residues 229 to 249 (IPVVTMMGLQFGFLLGGSIVV). The Periplasmic segment spans residues 250–277 (EKVFNWPGLGRLLVDSVEMRDYPVIQAE). Residues 278–298 (ILLFSLEFILINLVVDVLYAA) form a helical membrane-spanning segment. Residues 299-306 (INPAIRYK) lie on the Cytoplasmic side of the membrane.

This sequence belongs to the binding-protein-dependent transport system permease family. As to quaternary structure, the complex is composed of two ATP-binding proteins (GsiA), two transmembrane proteins (GsiC and GsiD) and a solute-binding protein (GsiB).

Its subcellular location is the cell inner membrane. Functionally, part of the ABC transporter complex GsiABCD involved in glutathione import. Probably responsible for the translocation of the substrate across the membrane. The protein is Glutathione transport system permease protein GsiC of Shigella flexneri serotype 5b (strain 8401).